The primary structure comprises 260 residues: Protein TONNEAU 1a (260 aa).

Residues 73–105 (SGRLLSALICEYLDWAQLNHTLIVYQPESNLPK) enclose the LisH domain. 2 disordered regions span residues 147-224 (TQGM…EEVT) and 236-260 (DRKT…EGRD). Residues 161–175 (ESSSSLESRNPPRRS) are compositionally biased toward low complexity. Positions 248-260 (NVRDGTNEEEGRD) are enriched in basic and acidic residues.

Interacts with CEN1, LNG1/TRM2 and LNG2/TRM1 (via C-terminus).

The protein resides in the cytoplasm. Its subcellular location is the cytoskeleton. Involved in the control of the dynamic organization of the cortical cytoskeleton. May play a role in the organization of microtubule arrays at the centrosome through interaction with centrin 1 (CEN1). This Arabidopsis thaliana (Mouse-ear cress) protein is Protein TONNEAU 1a (TON1A).